Reading from the N-terminus, the 260-residue chain is Shikimate dehydrogenase (NADP(+)) (260 aa).

Shikimate is bound by residues 14–16 and Thr60; that span reads SAS. The active-site Proton acceptor is Lys64. Shikimate is bound by residues Asn85 and Asp100. Residues 121–125, 145–150, and Phe201 each bind NADP(+); these read GAGGA and NRTYER. Tyr203 lines the shikimate pocket. Gly225 provides a ligand contact to NADP(+).

Belongs to the shikimate dehydrogenase family. Homodimer.

The catalysed reaction is shikimate + NADP(+) = 3-dehydroshikimate + NADPH + H(+). It participates in metabolic intermediate biosynthesis; chorismate biosynthesis; chorismate from D-erythrose 4-phosphate and phosphoenolpyruvate: step 4/7. Its function is as follows. Involved in the biosynthesis of the chorismate, which leads to the biosynthesis of aromatic amino acids. Catalyzes the reversible NADPH linked reduction of 3-dehydroshikimate (DHSA) to yield shikimate (SA). In Pyrobaculum islandicum (strain DSM 4184 / JCM 9189 / GEO3), this protein is Shikimate dehydrogenase (NADP(+)).